A 63-amino-acid chain; its full sequence is Large ribosomal subunit protein bL32c (63 aa).

Residues 39–63 form a disordered region; that stretch reads SFSSGNEHPKPKGFSGQQTNNKIFE. Residues 53–63 are compositionally biased toward polar residues; it reads SGQQTNNKIFE.

It belongs to the bacterial ribosomal protein bL32 family.

The protein resides in the plastid. It localises to the chloroplast. The chain is Large ribosomal subunit protein bL32c from Triticum aestivum (Wheat).